The primary structure comprises 89 residues: Small ribosomal subunit protein bS20 (89 aa).

It belongs to the bacterial ribosomal protein bS20 family.

Its function is as follows. Binds directly to 16S ribosomal RNA. This is Small ribosomal subunit protein bS20 from Solidesulfovibrio magneticus (strain ATCC 700980 / DSM 13731 / RS-1) (Desulfovibrio magneticus).